The primary structure comprises 500 residues: Aromatic-L-amino-acid decarboxylase (500 aa).

Proline 102 lines the L-tryptophan pocket. Serine 168 contacts pyridoxal 5'-phosphate. L-tryptophan is bound at residue histidine 203. Residue threonine 262 participates in pyridoxal 5'-phosphate binding. Residue histidine 318 coordinates L-tryptophan. Lysine 319 is modified (N6-(pyridoxal phosphate)lysine). Tyrosine 348 serves as a coordination point for L-tryptophan.

The protein belongs to the group II decarboxylase family. As to quaternary structure, homodimer. It depends on pyridoxal 5'-phosphate as a cofactor.

It catalyses the reaction L-tryptophan + H(+) = tryptamine + CO2. The catalysed reaction is 5-hydroxy-L-tryptophan + H(+) = serotonin + CO2. Its function is as follows. Catalyzes the decarboxylation of L-tryptophan to tryptamine and L-5-hydroxytryptophan to serotonin, respectively. The protein is Aromatic-L-amino-acid decarboxylase of Catharanthus roseus (Madagascar periwinkle).